The sequence spans 261 residues: Protein FAM216A (261 aa).

The disordered stretch occupies residues 1–52 (MPSRCPGVAGPPALARTEGSEGSAGQSYHQNSKGTGEQHKAERIKEGHRMSS). Over residues 23-35 (SAGQSYHQNSKGT) the composition is skewed to polar residues. Basic and acidic residues predominate over residues 36–49 (GEQHKAERIKEGHR).

This sequence belongs to the FAM216 family.

This Rattus norvegicus (Rat) protein is Protein FAM216A (Fam216a).